Reading from the N-terminus, the 194-residue chain is Probable calcium-binding protein CML45 (194 aa).

A compositionally biased stretch (basic and acidic residues) spans N52–Q63. A disordered region spans residues N52 to I81. Positions E64–I81 are enriched in acidic residues. 3 consecutive EF-hand domains span residues D76–F98, A122–K157, and S160–Y194. Residues D135, N137, D139, E146, D173, N175, D177, K179, and E184 each contribute to the Ca(2+) site.

In terms of biological role, potential calcium sensor. In Arabidopsis thaliana (Mouse-ear cress), this protein is Probable calcium-binding protein CML45.